Here is a 358-residue protein sequence, read N- to C-terminus: Protein Wnt-8b (358 aa).

The first 23 residues, 1-23, serve as a signal peptide directing secretion; the sequence is MFMHLEVYYYAFILMAHMKTCCG. A disulfide bridge connects residues C55 and C66. An N-linked (GlcNAc...) asparagine glycan is attached at N104. 10 disulfide bridges follow: C105–C113, C115–C133, C181–C195, C183–C190, C257–C295, C273–C288, C292–C334, C310–C325, C312–C322, and C317–C318. The O-palmitoleoyl serine moiety is linked to residue S187. 2 N-linked (GlcNAc...) asparagine glycosylation sites follow: N260 and N279. N-linked (GlcNAc...) asparagine glycosylation is present at N345.

Belongs to the Wnt family. Post-translationally, palmitoleoylation is required for efficient binding to frizzled receptors. Depalmitoleoylation leads to Wnt signaling pathway inhibition. In terms of processing, proteolytic processing by tiki1 and tiki2 promotes oxidation and formation of large disulfide-bond oligomers, leading to inactivation of wnt8b. Hindbrain r1, 2 and 5.

Its subcellular location is the secreted. It is found in the extracellular space. The protein resides in the extracellular matrix. Its function is as follows. Ligand for fzd8a, a member of the G-protein coupled frizzled receptor family. May play a role in the establishment of polarity in the nervous system. Involved in canonical Wnt signaling pathway. During embryonic development, required for the acquisition of caudal diencephalic fate. Antagonizes eye specification. In Danio rerio (Zebrafish), this protein is Protein Wnt-8b (wnt8b).